Consider the following 895-residue polypeptide: Serine/threonine-protein kinase-like protein ACR4 (895 aa).

A signal peptide spans 1–29 (MRMFETRAREWILLVKLVLFTSIWQLASA). Over 30–434 (LGSMSSIAIS…FWSLQLPIAT (405 aa)) the chain is Extracellular. Tandem repeats lie at residues 38 to 73 (ISYG…GTPG), 77 to 112 (FIGL…GVPQ), 130 to 167 (LCGL…VFDK), 169 to 202 (LHSL…QVIS), 210 to 245 (FQKI…EEVT), 262 to 296 (LLAV…TPAP), and 301 to 339 (FYDL…AVSP). A 7 X 36 AA repeats region spans residues 38–339 (ISYGEGGSVF…PASIPLAVSP (302 aa)). N-linked (GlcNAc...) asparagine glycosylation is found at Asn-158 and Asn-196. The N-linked (GlcNAc...) asparagine glycan is linked to Asn-290. The TNFR-Cys repeat unit spans residues 346–395 (PCPPGTHELSNQENSPCKFTGSHICLPCSTSCPPGMYQKSVCTERSDQVC). 3 disulfide bridges follow: Cys-347-Cys-370, Cys-373-Cys-387, and Cys-377-Cys-395. 2 N-linked (GlcNAc...) asparagine glycosylation sites follow: Asn-398 and Asn-410. A helical transmembrane segment spans residues 435-455 (AEIGFALFLVAVVSITAALYI). The Cytoplasmic segment spans residues 456–895 (RYRLRNCRCS…GQSLFLHHNF (440 aa)). Position 475 is a phosphoserine (Ser-475). In terms of domain architecture, Protein kinase spans 512 to 789 (FKEESIVGKG…KVTTALERAL (278 aa)). Residues 518-526 (VGKGSFSCV) and Lys-540 contribute to the ATP site. The Proton acceptor role is filled by Asp-641. Residues 818–895 (SWRIGSKRSG…GQSLFLHHNF (78 aa)) are disordered. Residues 865-877 (EGRKQQEALRSLE) are compositionally biased toward basic and acidic residues.

Belongs to the protein kinase superfamily. Ser/Thr protein kinase family. Homodimer. Interacts with PP2A3. In terms of processing, autophosphorylated and phosphorylated by ALE2. In terms of tissue distribution, expressed in seedlings, floral buds, siliques, leaves, shoot apical meristems (SAM), and, to a lower extent, in roots.

It is found in the cell membrane. The protein resides in the endosome. Its subcellular location is the multivesicular body membrane. It catalyses the reaction L-seryl-[protein] + ATP = O-phospho-L-seryl-[protein] + ADP + H(+). The catalysed reaction is L-threonyl-[protein] + ATP = O-phospho-L-threonyl-[protein] + ADP + H(+). Controls formative cell division in meristems, including root tips and lateral root initiation zones of the pericycle, in response to CLE40 signal. Acts with CLE40p peptide as a ligand-receptor pair in a signal transduction pathway, coordinating movement of the root tip and organization of cell divisions in the root meristem. Required during embryogenesis and development, probably for the differentiation of protoderm and epidermal cells. Involved in the regulation of cellular organization during the development of sepal margins and ovule integument outgrowth and promotes giant cell formation. Can phosphorylate ALE2. The sequence is that of Serine/threonine-protein kinase-like protein ACR4 from Arabidopsis thaliana (Mouse-ear cress).